The chain runs to 1238 residues: Erythroid differentiation-related factor 1 (1238 aa).

Disordered stretches follow at residues 1-38, 220-268, 517-561, and 620-647; these read MGDA…AQGS, QPVS…GSEP, PKKE…SDDS, and KKES…RGGP. Low complexity-rich tracts occupy residues 9 to 38, 223 to 241, and 253 to 263; these read AEGP…AQGS, SSTA…NDSE, and SSVSEDPSASS. Positions 530 to 547 are enriched in acidic residues; it reads NSDESYSEEEEEMPDSDE. 2 TPR repeats span residues 693 to 726 and 914 to 953; these read SKAY…HDTY and AQAH…LGTR.

It localises to the nucleus. In terms of biological role, transcription factor involved in erythroid differentiation. Involved in transcriptional activation of the globin gene. This chain is Erythroid differentiation-related factor 1 (EDRF1), found in Homo sapiens (Human).